The primary structure comprises 228 residues: ATP synthase subunit a 2 (228 aa).

6 helical membrane passes run 16–36 (VGTT…GAWL), 74–94 (VFPF…SSLI), 103–123 (DLSA…WFGI), 139–159 (SPFL…ALAV), 173–193 (LLVL…LHIV), and 194–214 (EALV…AGAI).

The protein belongs to the ATPase A chain family. F-type ATPases have 2 components, CF(1) - the catalytic core - and CF(0) - the membrane proton channel. CF(1) has five subunits: alpha(3), beta(3), gamma(1), delta(1), epsilon(1). CF(0) has three main subunits: a(1), b(2) and c(9-12). The alpha and beta chains form an alternating ring which encloses part of the gamma chain. CF(1) is attached to CF(0) by a central stalk formed by the gamma and epsilon chains, while a peripheral stalk is formed by the delta and b chains.

It localises to the cell inner membrane. Functionally, key component of the proton channel; it plays a direct role in the translocation of protons across the membrane. In Pelobacter propionicus (strain DSM 2379 / NBRC 103807 / OttBd1), this protein is ATP synthase subunit a 2.